The primary structure comprises 137 residues: Putative pre-16S rRNA nuclease (137 aa).

It belongs to the YqgF nuclease family.

Its subcellular location is the cytoplasm. Functionally, could be a nuclease involved in processing of the 5'-end of pre-16S rRNA. The polypeptide is Putative pre-16S rRNA nuclease (Clostridium botulinum (strain Alaska E43 / Type E3)).